Reading from the N-terminus, the 1450-residue chain is ABC transporter G family member 37 (1450 aa).

In terms of domain architecture, ABC transporter 1 spans 158–431; it reads GNALHILPNK…FEFMGFRCPA (274 aa). Position 191 to 198 (191 to 198) interacts with ATP; the sequence is GPPGSGKT. Residues 509–721 enclose the ABC transmembrane type-2 1 domain; it reads ELLKATIDRE…AQNAISTNEF (213 aa). A run of 6 helical transmembrane segments spans residues 527-547, 559-579, 614-634, 646-666, 670-690, and 756-776; these read FMYIFKAVNLTLMALIVMTTF, GMIYLGALYFALDTVMFNGFA, IPITFLEVGVYVFITYYVIGF, LLLLALNQMSSALFRFIAGIG, VVSHTFGPLSLLAFAALGGFI, and IGLGALLGYTLLFNLLYTVAL. The region spanning 852-1104 is the ABC transporter 2 domain; it reads ISFNDVRYSV…KLIEYFEGID (253 aa). 897–904 serves as a coordination point for ATP; sequence GVSGAGKT. The 215-residue stretch at 1177–1391 folds into the ABC transmembrane type-2 2 domain; the sequence is TQCLACLWKQ…TLYGLVASQF (215 aa). Helical transmembrane passes span 1198–1218, 1236–1256, 1284–1304, 1311–1331, 1341–1361, 1372–1392, and 1422–1442; these read AVRLLFTIVIALMFGTMFWNL, YAAVLYIGVQNSGSVQPVVVV, LPYIMVQTLIYGVLVYSMIGF, FLWYLFFMYFTLLYFTFYGMM, IAAIISSAFYNVWNLFSGYLI, WYCWICPVAWTLYGLVASQFG, and VVAVVHVVFAVTFAFLFSFAI.

Belongs to the ABC transporter superfamily. ABCG family. PDR (TC 3.A.1.205) subfamily.

The protein localises to the membrane. Its function is as follows. May be a general defense protein. The sequence is that of ABC transporter G family member 37 from Oryza sativa subsp. japonica (Rice).